Reading from the N-terminus, the 428-residue chain is Glutamyl-tRNA reductase (428 aa).

Substrate contacts are provided by residues 55–58 (TCNR), Ser114, 119–121 (ETQ), and Gln125. Cys56 (nucleophile) is an active-site residue. 194–199 (GAGEMI) is a binding site for NADP(+).

Belongs to the glutamyl-tRNA reductase family. As to quaternary structure, homodimer.

The enzyme catalyses (S)-4-amino-5-oxopentanoate + tRNA(Glu) + NADP(+) = L-glutamyl-tRNA(Glu) + NADPH + H(+). It functions in the pathway porphyrin-containing compound metabolism; protoporphyrin-IX biosynthesis; 5-aminolevulinate from L-glutamyl-tRNA(Glu): step 1/2. Its function is as follows. Catalyzes the NADPH-dependent reduction of glutamyl-tRNA(Glu) to glutamate 1-semialdehyde (GSA). In Paraburkholderia xenovorans (strain LB400), this protein is Glutamyl-tRNA reductase.